The sequence spans 900 residues: UPF0182 protein Ppro_3567 (900 aa).

Helical transmembrane passes span 15–35, 60–80, 112–132, 174–194, 210–230, 257–277, and 282–302; these read FFPL…LLNL, GAGL…LHVA, VSML…AMKW, FIIL…GGIL, LAVL…LDSF, VLTF…WKGV, and LLAP…YPGV.

It belongs to the UPF0182 family.

The protein localises to the cell membrane. This Pelobacter propionicus (strain DSM 2379 / NBRC 103807 / OttBd1) protein is UPF0182 protein Ppro_3567.